Consider the following 154-residue polypeptide: 20 kDa calcium-binding protein (154 aa).

EF-hand domains are found at residues 13–48 (DQVKIAKDVFKRFDKRGQEKISTTDLGPAFRALNLT), 49–84 (VKPDTLKEWADQVDDDATGFIDFNGFLICYGKKLQE), 86–121 (QDERDLRDAFRVLDKNKRGEIDVEDLRWILKGLGDD), and 122–154 (LTEEEIDDMIRDTDTDGSGFVDFDEFYKLMTSE). 11 residues coordinate Ca(2+): Asp62, Asp64, Thr66, Asp99, Asn101, Glu105, Asp110, Asp135, Asp137, Ser139, and Glu146.

It localises to the tegument membrane. Its function is as follows. Calcium-binding protein. This Schistosoma mansoni (Blood fluke) protein is 20 kDa calcium-binding protein (SM20).